Reading from the N-terminus, the 323-residue chain is MARGPGLAPPPLRLPLLLLVLAAVTGHTAAQDNCTCPTNKMTVCSPDGPGGRCQCRALGSGMAVDCSTLTSKCLLLKARMSAPKNARTLVRPSEHALVDNDGLYDPDCDPEGRFKARQCNQTSVCWCVNSVGVRRTDKGDLSLRCDELVRTHHILIDLRHRPTAGAFNHSDLDAELRRLFRERYRLHPKFVAAVHYEQPTIQIELRQNTSQKAAGDVDIGDAAYYFERDIKGESLFQGRGGLDLRVRGEPLQVERTLIYYLDEIPPKFSMKRLTAGLIAVIVVVVVALVAGMAVLVITNRRKSGKYKKVEIKELGELRKEPSL.

A signal peptide spans 1-26 (MARGPGLAPPPLRLPLLLLVLAAVTG). Residues 27–274 (HTAAQDNCTC…PPKFSMKRLT (248 aa)) are Extracellular-facing. Asn-33 carries N-linked (GlcNAc...) asparagine glycosylation. Residues 70–145 (TSKCLLLKAR…TDKGDLSLRC (76 aa)) form the Thyroglobulin type-1 domain. 3 disulfide bridges follow: Cys-73–Cys-108, Cys-119–Cys-125, and Cys-127–Cys-145. Residue Asn-120 is glycosylated (N-linked (GlcNAc...) asparagine). N-linked (GlcNAc...) asparagine glycosylation is found at Asn-168 and Asn-208. Residues 275 to 297 (AGLIAVIVVVVVALVAGMAVLVI) traverse the membrane as a helical segment. The Cytoplasmic segment spans residues 298 to 323 (TNRRKSGKYKKVEIKELGELRKEPSL).

It belongs to the EPCAM family. In terms of processing, the N-terminus is blocked. In terms of tissue distribution, placenta, pancreatic carcinoma cell lines.

It is found in the membrane. May function as a growth factor receptor. This Homo sapiens (Human) protein is Tumor-associated calcium signal transducer 2 (TACSTD2).